A 519-amino-acid polypeptide reads, in one-letter code: 2-isopropylmalate synthase (519 aa).

Residues 12-274 (VVIFDTTLRD…WCNVESTMLT (263 aa)) enclose the Pyruvate carboxyltransferase domain. Mn(2+) contacts are provided by Asp-21, His-209, His-211, and Asn-245. The segment at 398 to 519 (KLSSLTVIAG…QRDVPAAAAS (122 aa)) is regulatory domain.

Belongs to the alpha-IPM synthase/homocitrate synthase family. LeuA type 1 subfamily. Homodimer. The cofactor is Mn(2+).

It is found in the cytoplasm. The catalysed reaction is 3-methyl-2-oxobutanoate + acetyl-CoA + H2O = (2S)-2-isopropylmalate + CoA + H(+). Its pathway is amino-acid biosynthesis; L-leucine biosynthesis; L-leucine from 3-methyl-2-oxobutanoate: step 1/4. In terms of biological role, catalyzes the condensation of the acetyl group of acetyl-CoA with 3-methyl-2-oxobutanoate (2-ketoisovalerate) to form 3-carboxy-3-hydroxy-4-methylpentanoate (2-isopropylmalate). The protein is 2-isopropylmalate synthase of Nitrobacter winogradskyi (strain ATCC 25391 / DSM 10237 / CIP 104748 / NCIMB 11846 / Nb-255).